The chain runs to 66 residues: Small vasohibin-binding protein (66 aa).

Residues 1–23 (MDPPARKEKTKVKESVSRVEKAK) are compositionally biased toward basic and acidic residues. A disordered region spans residues 1 to 31 (MDPPARKEKTKVKESVSRVEKAKQKSAQQEL). The stretch at 5 to 52 (ARKEKTKVKESVSRVEKAKQKSAQQELKQRQRAEIYALNRVMTELEQQ) forms a coiled coil.

Belongs to the SVBP family. Interacts with VASH1 and VASH2.

It localises to the cytoplasm. The protein resides in the secreted. Its subcellular location is the cytoskeleton. Functionally, enhances the tyrosine carboxypeptidase activity of VASH1 and VASH2, thereby promoting the removal of the C-terminal tyrosine residue of alpha-tubulin. This activity is critical for spindle function and accurate chromosome segregation during mitosis since microtubule detyronisation regulates mitotic spindle length and postioning. Also required to enhance the solubility and secretion of VASH1 and VASH2. Plays a role in axon and excitatory synapse formation. The chain is Small vasohibin-binding protein from Homo sapiens (Human).